The chain runs to 351 residues: Alcohol dehydrogenase 2 (351 aa).

The Zn(2+) site is built by cysteine 47, histidine 70, cysteine 101, cysteine 104, cysteine 107, cysteine 115, and cysteine 157. Residues 181–187 (GAGGGLG), aspartate 205, lysine 210, 272–274 (VGL), and arginine 344 contribute to the NAD(+) site.

The protein belongs to the zinc-containing alcohol dehydrogenase family. In terms of assembly, homotetramer. Zn(2+) is required as a cofactor.

It catalyses the reaction a secondary alcohol + NAD(+) = a ketone + NADH + H(+). In terms of biological role, versatile oxidoreductase that catalyzes the oxidation and reduction of a broad range of substrates. Preferentially oxidizes secondary alcohols. Has highest activity for racemic 2-octanol. Is also an efficient reductase for selected substrates. Substrate selectivity was found for medium chain lipophilic ketones. Has highest activities for 2-octanone, 2-nonanone and 2-decanone. The enzyme is (S)-selective in the reduction direction and produces exclusively the (S)-enantiomer. This Yarrowia lipolytica (strain CLIB 122 / E 150) (Yeast) protein is Alcohol dehydrogenase 2 (ADH2).